The following is an 88-amino-acid chain: Sec-independent protein translocase protein TatA (88 aa).

A helical membrane pass occupies residues 1-21 (MGSLSPWHWVVLVVVVVLLFG). Positions 49–71 (ENQAQASALETPMQNPTVVQSQR) are enriched in polar residues. Positions 49–88 (ENQAQASALETPMQNPTVVQSQRVVPPWSTEQDHTEARPA) are disordered. A compositionally biased stretch (basic and acidic residues) spans 79–88 (EQDHTEARPA).

It belongs to the TatA/E family. As to quaternary structure, the Tat system comprises two distinct complexes: a TatABC complex, containing multiple copies of TatA, TatB and TatC subunits, and a separate TatA complex, containing only TatA subunits. Substrates initially bind to the TatABC complex, which probably triggers association of the separate TatA complex to form the active translocon.

It is found in the cell membrane. Its function is as follows. Part of the twin-arginine translocation (Tat) system that transports large folded proteins containing a characteristic twin-arginine motif in their signal peptide across membranes. TatA could form the protein-conducting channel of the Tat system. The polypeptide is Sec-independent protein translocase protein TatA (Mycobacterium leprae (strain TN)).